The following is a 542-amino-acid chain: Putative leucine aminopeptidase 1 (542 aa).

Residues K294 and D299 each contribute to the Mn(2+) site. K323 is an active-site residue. D336, D396, and E398 together coordinate Mn(2+). Residue R400 is part of the active site.

The protein belongs to the peptidase M17 family. In terms of assembly, homohexamer (dimer of homotrimers). It depends on Mn(2+) as a cofactor.

The protein resides in the cytoplasm. The enzyme catalyses Release of an N-terminal amino acid, Xaa-|-Yaa-, in which Xaa is preferably Leu, but may be other amino acids including Pro although not Arg or Lys, and Yaa may be Pro. Amino acid amides and methyl esters are also readily hydrolyzed, but rates on arylamides are exceedingly low.. It catalyses the reaction Release of N-terminal proline from a peptide.. Its function is as follows. Presumably involved in the processing and regular turnover of intracellular proteins. Catalyzes the removal of unsubstituted N-terminal amino acids from various peptides. This Oryza sativa subsp. japonica (Rice) protein is Putative leucine aminopeptidase 1.